The primary structure comprises 289 residues: MKTPELITDPAAWQARCTAAREAGTRIALVTTMGYLHEGHLSLMREARRRADAGGRRGLAVGTIFVNPTQFGPTEDLARYPRDLEGDLAKCAAAGLDAVLAPSDPALMFAPGHETWVTVERASQGLDGASRPGHFRGVATVVAKLFNLTRPHVALFGEKDWQQLAVIRAMVRDLAFGIEIVGMPIVREPDGLALSSRNAYLSPDERRRALALSGALAEAREATARGERDAAALRAGARARLEAAGGRVDYVELVHPETLAPVARAEPGTVLLLAASFGTTRLIDNGRLP.

Position 33–40 (33–40 (MGYLHEGH)) interacts with ATP. His-40 (proton donor) is an active-site residue. (R)-pantoate is bound at residue Gln-70. Gln-70 contributes to the beta-alanine binding site. ATP is bound at residue 157–160 (GEKD). Gln-163 provides a ligand contact to (R)-pantoate. Residues Val-186 and 194-197 (LSSR) contribute to the ATP site.

It belongs to the pantothenate synthetase family. Homodimer.

The protein resides in the cytoplasm. The enzyme catalyses (R)-pantoate + beta-alanine + ATP = (R)-pantothenate + AMP + diphosphate + H(+). It participates in cofactor biosynthesis; (R)-pantothenate biosynthesis; (R)-pantothenate from (R)-pantoate and beta-alanine: step 1/1. Functionally, catalyzes the condensation of pantoate with beta-alanine in an ATP-dependent reaction via a pantoyl-adenylate intermediate. In Anaeromyxobacter dehalogenans (strain 2CP-C), this protein is Pantothenate synthetase.